The chain runs to 338 residues: RNA 3'-terminal phosphate cyclase (338 aa).

Residues Q103 and 283-287 (YLADQ) contribute to the ATP site. H308 acts as the Tele-AMP-histidine intermediate in catalysis.

The protein belongs to the RNA 3'-terminal cyclase family. Type 1 subfamily.

It is found in the cytoplasm. The enzyme catalyses a 3'-end 3'-phospho-ribonucleotide-RNA + ATP = a 3'-end 2',3'-cyclophospho-ribonucleotide-RNA + AMP + diphosphate. Its function is as follows. Catalyzes the conversion of 3'-phosphate to a 2',3'-cyclic phosphodiester at the end of RNA. The mechanism of action of the enzyme occurs in 3 steps: (A) adenylation of the enzyme by ATP; (B) transfer of adenylate to an RNA-N3'P to produce RNA-N3'PP5'A; (C) and attack of the adjacent 2'-hydroxyl on the 3'-phosphorus in the diester linkage to produce the cyclic end product. The biological role of this enzyme is unknown but it is likely to function in some aspects of cellular RNA processing. This chain is RNA 3'-terminal phosphate cyclase, found in Escherichia coli O8 (strain IAI1).